Here is a 374-residue protein sequence, read N- to C-terminus: DNA replication and repair protein RecF (374 aa).

30 to 37 (GPNAQGKS) provides a ligand contact to ATP.

This sequence belongs to the RecF family.

Its subcellular location is the cytoplasm. The RecF protein is involved in DNA metabolism; it is required for DNA replication and normal SOS inducibility. RecF binds preferentially to single-stranded, linear DNA. It also seems to bind ATP. The polypeptide is DNA replication and repair protein RecF (Acaryochloris marina (strain MBIC 11017)).